Here is a 237-residue protein sequence, read N- to C-terminus: Segregation and condensation protein A (237 aa).

Belongs to the ScpA family. Component of a cohesin-like complex composed of ScpA, ScpB and the Smc homodimer, in which ScpA and ScpB bind to the head domain of Smc. The presence of the three proteins is required for the association of the complex with DNA.

Its subcellular location is the cytoplasm. Participates in chromosomal partition during cell division. May act via the formation of a condensin-like complex containing Smc and ScpB that pull DNA away from mid-cell into both cell halves. This is Segregation and condensation protein A from Streptococcus thermophilus (strain ATCC BAA-250 / LMG 18311).